The chain runs to 228 residues: Protein CWC15 homolog A (228 aa).

Positions 1–126 (MTTAARPTFE…DEDSDDDTAA (126 aa)) are disordered. Residues 24–34 (SQLSKQYSSRD) are compositionally biased toward polar residues. The span at 52–84 (EEVRSRDFRRELEERERVVARDKNRDRPTREHT) shows a compositional bias: basic and acidic residues. Over residues 102–124 (DADDPLTDEDGDEDSDEDSDDDT) the composition is skewed to acidic residues. A coiled-coil region spans residues 121-165 (DDDTAALLAELEKIKKERAEEKDRKELEQKAEEERIRMENILSGN).

Belongs to the CWC15 family. As to quaternary structure, identified in the spliceosome C complex. Component of the minor spliceosome, which splices U12-type introns.

It localises to the nucleus. Involved in pre-mRNA splicing as component of the spliceosome. This chain is Protein CWC15 homolog A (cwc15-a), found in Xenopus laevis (African clawed frog).